The primary structure comprises 387 residues: Decapping nuclease RAI1 (387 aa).

E172 is an a divalent metal cation binding site. The residue at position 198 (S198) is a Phosphoserine. E221 provides a ligand contact to substrate. D223, E241, and L242 together coordinate a divalent metal cation. 2 residues coordinate substrate: K243 and Q267. The segment at 273 to 387 is interaction with RAT1; it reads IPRIIYGFKD…GFKEWRKSLK (115 aa).

This sequence belongs to the DXO/Dom3Z family. Interacts with RAT1, RTT103 and pre-60S ribosomal subunits. Interacts with RAT1; the interaction is direct, stabilizes RAT1 protein structure and stimulates its exoribonuclease activity. The interaction also stimulates RAI1 pyrophosphohydrolase activity, probably by recruiting it to mRNA substrates. A divalent metal cation is required as a cofactor.

Its subcellular location is the nucleus. The catalysed reaction is a 5'-end NAD(+)-phospho-ribonucleoside in mRNA + H2O = a 5'-end phospho-ribonucleoside in mRNA + NAD(+) + H(+). The enzyme catalyses a 5'-end (N(7)-methyl 5'-triphosphoguanosine)-ribonucleoside-ribonucleotide in mRNA + H2O = a (N(7)-methyl 5'-triphosphoguanosine)-nucleoside + a 5'-end phospho-ribonucleoside in mRNA + H(+). It carries out the reaction a 5'-end triphospho-ribonucleoside in mRNA + H2O = a 5'-end phospho-ribonucleoside in mRNA + diphosphate + H(+). Its function is as follows. Decapping enzyme for NAD-capped RNAs: specifically hydrolyzes the nicotinamide adenine dinucleotide (NAD) cap from a subset of RNAs by removing the entire NAD moiety from the 5'-end of an NAD-capped RNA. The NAD-cap is present at the 5'-end of some RNAs and snoRNAs. In contrast to the canonical 5'-end N7 methylguanosine (m7G) cap, the NAD cap promotes mRNA decay. Also acts as a non-canonical decapping enzyme that removes the entire cap structure of m7G capped or incompletely capped RNAs. Has decapping activity toward incomplete 5'-end m7G cap mRNAs such as unmethylated 5'-end-capped RNA (cap0), while it has no activity toward 2'-O-ribose methylated m7G cap (cap1). Also possesses RNA 5'-pyrophosphohydrolase activity by hydrolyzing the 5'-end triphosphate to release pyrophosphates. Stimulates exoribonuclease activity of RAT1, allowing it to degrade RNAs with stable secondary structure more effectively. Required for the processing of nuclear mRNA and rRNA precursors. May promote termination of transcription by RNA polymerase II. The sequence is that of Decapping nuclease RAI1 from Saccharomyces cerevisiae (strain ATCC 204508 / S288c) (Baker's yeast).